The primary structure comprises 330 residues: Beta-hexosaminidase (330 aa).

Residues Asp-62, Arg-70, Arg-130, and 160 to 161 (KH) each bind substrate. Residue His-173 is the Proton donor/acceptor of the active site. The Nucleophile role is filled by Asp-242.

The protein belongs to the glycosyl hydrolase 3 family. NagZ subfamily. As to quaternary structure, monomer.

Its subcellular location is the cytoplasm. It catalyses the reaction Hydrolysis of terminal non-reducing N-acetyl-D-hexosamine residues in N-acetyl-beta-D-hexosaminides.. It functions in the pathway cell wall biogenesis; peptidoglycan recycling. In terms of biological role, plays a role in peptidoglycan recycling by cleaving the terminal beta-1,4-linked N-acetylglucosamine (GlcNAc) from peptide-linked peptidoglycan fragments, giving rise to free GlcNAc, anhydro-N-acetylmuramic acid and anhydro-N-acetylmuramic acid-linked peptides. Plays a role in beta-lactam antibiotic resistance via its role in generating anhydro-N-acetylmuramic acid-linked peptides; these peptides function as signaling molecules that induce high-level expression of the beta-lactamase AmpC. The sequence is that of Beta-hexosaminidase from Vibrio cholerae serotype O1 (strain ATCC 39315 / El Tor Inaba N16961).